Reading from the N-terminus, the 480-residue chain is Cytochrome b-c1 complex subunit 1, mitochondrial (480 aa).

Residues 1–34 constitute a mitochondrion transit peptide; sequence MAASAVCRAACSGTQVLLRTRRSPALLRLPALRG. 2 positions are modified to N6-acetyllysine: Lys-111 and Lys-138. Lys-163 is modified (N6-acetyllysine; alternate). N6-succinyllysine; alternate is present on Lys-163. Ser-212 is modified (phosphoserine). Thr-214 is subject to Phosphothreonine. Lys-248 is subject to N6-acetyllysine.

It belongs to the peptidase M16 family. UQCRC1/QCR1 subfamily. Component of the ubiquinol-cytochrome c oxidoreductase (cytochrome b-c1 complex, complex III, CIII), a multisubunit enzyme composed of 11 subunits. The complex is composed of 3 respiratory subunits cytochrome b, cytochrome c1 and Rieske protein UQCRFS1, 2 core protein subunits UQCRC1/QCR1 and UQCRC2/QCR2, and 6 low-molecular weight protein subunits UQCRH/QCR6, UQCRB/QCR7, UQCRQ/QCR8, UQCR10/QCR9, UQCR11/QCR10 and subunit 9, the cleavage product of Rieske protein UQCRFS1. The complex exists as an obligatory dimer and forms supercomplexes (SCs) in the inner mitochondrial membrane with NADH-ubiquinone oxidoreductase (complex I, CI) and cytochrome c oxidase (complex IV, CIV), resulting in different assemblies (supercomplex SCI(1)III(2)IV(1) and megacomplex MCI(2)III(2)IV(2)). Interacts with UQCC6. Interacts with STMP1. Post-translationally, acetylation of Lys-138 is observed in liver mitochondria from fasted mice but not from fed mice. In terms of tissue distribution, expressed in neurons and astrocytes of the cerebral cortex and hippocampus (at protein level).

The protein resides in the mitochondrion inner membrane. In terms of biological role, component of the ubiquinol-cytochrome c oxidoreductase, a multisubunit transmembrane complex that is part of the mitochondrial electron transport chain which drives oxidative phosphorylation. The respiratory chain contains 3 multisubunit complexes succinate dehydrogenase (complex II, CII), ubiquinol-cytochrome c oxidoreductase (cytochrome b-c1 complex, complex III, CIII) and cytochrome c oxidase (complex IV, CIV), that cooperate to transfer electrons derived from NADH and succinate to molecular oxygen, creating an electrochemical gradient over the inner membrane that drives transmembrane transport and the ATP synthase. The cytochrome b-c1 complex catalyzes electron transfer from ubiquinol to cytochrome c, linking this redox reaction to translocation of protons across the mitochondrial inner membrane, with protons being carried across the membrane as hydrogens on the quinol. In the process called Q cycle, 2 protons are consumed from the matrix, 4 protons are released into the intermembrane space and 2 electrons are passed to cytochrome c. The 2 core subunits UQCRC1/QCR1 and UQCRC2/QCR2 are homologous to the 2 mitochondrial-processing peptidase (MPP) subunits beta-MPP and alpha-MPP respectively, and they seem to have preserved their MPP processing properties. May be involved in the in situ processing of UQCRFS1 into the mature Rieske protein and its mitochondrial targeting sequence (MTS)/subunit 9 when incorporated into complex III. Seems to play an important role in the maintenance of proper mitochondrial function in nigral dopaminergic neurons. In Mus musculus (Mouse), this protein is Cytochrome b-c1 complex subunit 1, mitochondrial (Uqcrc1).